A 712-amino-acid chain; its full sequence is MNQYLAITSRGLENLLAEELEQLGAQSIQVVHAGVRFKADQSTAYRCCLWTRISSRIIQVLSEFTVRDDMDLYLGAAAINWTEYFSNATRIVVDFNGTNREIRNSQYGAMKVKDAIVDRFTKADLRRPNIDREQPDLRIHMRLSGEKGVLGLDMAGSGLHQRGYRTEAGRAPLRETHAAALVLKSGWTPGQPLLDPMCGSGTLLIEAAMMAADIAPGLKRKRWGFESIKDFDKDAWLEIHAEASVKARRGPAKVQTKFFGFELEHRILAIARDNAGRAGVKELINFQQGDATELKAPEGFDAGIVICNPPYGERLGTTPELISLYTELGNRLKLAFAGSSASIYSGSNELLSCLRMRADKQFKLPNGALDCVLKTYLITAGSVKKEEGEAEGHVEQENVAPDFANRLKKNITKLNKWAKKEGIDCYRIYDADLPNYNAAIDKYNDYLIIQEYAAPKTVPEEIARRRIMDVLRATIEVTGVQTDKVILKVRERQKGKNQYQKLSNAERHIIVNEYGVDLKVNLYDYLDTGLFLDHRITRKMLGDMAKGKDFLNLFAYTGSASVHAACGGAKSTTTIDMSNTYLGWAQENMELNNQVGDQHEFIQADCLQWLQEVDDTFDLIFIDPPTFSNSKRMKQTFDIQRDHIMLMENLKRMLRTDGKIVFSNNKRQFKMDLEKLNELGLDAKNISDKTLPMDFAKNKHIHNSWIITHKED.

The THUMP domain occupies 43–154 (TAYRCCLWTR…GEKGVLGLDM (112 aa)).

This sequence belongs to the methyltransferase superfamily. RlmKL family.

Its subcellular location is the cytoplasm. It catalyses the reaction guanosine(2445) in 23S rRNA + S-adenosyl-L-methionine = N(2)-methylguanosine(2445) in 23S rRNA + S-adenosyl-L-homocysteine + H(+). The catalysed reaction is guanosine(2069) in 23S rRNA + S-adenosyl-L-methionine = N(2)-methylguanosine(2069) in 23S rRNA + S-adenosyl-L-homocysteine + H(+). Functionally, specifically methylates the guanine in position 2445 (m2G2445) and the guanine in position 2069 (m7G2069) of 23S rRNA. This Photobacterium profundum (strain SS9) protein is Ribosomal RNA large subunit methyltransferase K/L.